A 770-amino-acid polypeptide reads, in one-letter code: Transcription activator AMTR1 (770 aa).

The segment at residues 7 to 34 (CLTCRQRKLKCDEKKPVCRQCAKASREC) is a DNA-binding region (zn(2)-C6 fungal-type).

The protein localises to the nucleus. Functionally, transcription factor that regulates the expression of the gene clusters that mediate the biosynthesis of AM-toxins, host-selective toxins (HSTs) causing Alternaria blotch on apple, a worldwide distributed disease. AM-toxins have two target sites for affecting susceptible apple cells; they cause invagination of the plasma membrane and electrolyte loss and chloroplast disorganization. This chain is Transcription activator AMTR1, found in Alternaria alternata (Alternaria rot fungus).